Here is a 192-residue protein sequence, read N- to C-terminus: Transmembrane protein 276 (192 aa).

Residues 1 to 32 form the signal peptide; it reads MAPKPGAEWSTALSHLVLGVVSLHAAVSTAEA. Transmembrane regions (helical) follow at residues 35–55, 63–83, 89–109, and 114–134; these read GAAA…APGL, AGAW…FHWV, SANL…HLGP, and VAGQ…AVFT.

It localises to the membrane. This chain is Transmembrane protein 276, found in Homo sapiens (Human).